Consider the following 59-residue polypeptide: MFTLKKSMLLLLFLGTISLTLCEEERDANEEEENGGEVKVEEKRFIGPIISALASLFGG.

A signal peptide spans 1–22 (MFTLKKSMLLLLFLGTISLTLC). Positions 23–42 (EEERDANEEEENGGEVKVEE) are excised as a propeptide.

The protein belongs to the frog skin active peptide (FSAP) family. Temporin subfamily. Expressed by the skin glands.

The protein resides in the secreted. Functionally, antimicrobial peptide. This chain is Temporin-CDYe, found in Rana dybowskii (Dybovsky's frog).